The sequence spans 147 residues: Hemoglobin subunit epsilon (147 aa).

The Globin domain maps to His3–His147. Phosphoserine occurs at positions 14 and 51. Heme b-binding residues include His64 and His93.

This sequence belongs to the globin family. In terms of assembly, heterotetramer of two alpha chains and two epsilon chains in early embryonic hemoglobin Gower-2; two zeta chains and two epsilon chains in early embryonic hemoglobin Gower-1. As to expression, red blood cells.

Its function is as follows. The epsilon chain is a beta-type chain of early mammalian embryonic hemoglobin. This is Hemoglobin subunit epsilon (HBE1) from Carlito syrichta (Philippine tarsier).